The chain runs to 130 residues: Glycine cleavage system H protein (130 aa).

The Lipoyl-binding domain maps to 25-106 (TALIGISDFA…PFDSWMIKVK (82 aa)). An N6-lipoyllysine modification is found at K66.

It belongs to the GcvH family. In terms of assembly, the glycine cleavage system is composed of four proteins: P, T, L and H. (R)-lipoate serves as cofactor.

The glycine cleavage system catalyzes the degradation of glycine. The H protein shuttles the methylamine group of glycine from the P protein to the T protein. The chain is Glycine cleavage system H protein from Leptospira borgpetersenii serovar Hardjo-bovis (strain JB197).